The sequence spans 312 residues: Malate dehydrogenase (312 aa).

Residues 10–15 and Asp34 each bind NAD(+); that span reads GAGNTG. Positions 85 and 91 each coordinate substrate. NAD(+) contacts are provided by residues Asn98 and 121-123; that span reads LTN. Substrate is bound by residues Asn123 and Arg154. Catalysis depends on His178, which acts as the Proton acceptor.

It belongs to the LDH/MDH superfamily. MDH type 3 family.

The catalysed reaction is (S)-malate + NAD(+) = oxaloacetate + NADH + H(+). In terms of biological role, catalyzes the reversible oxidation of malate to oxaloacetate. In Staphylococcus saprophyticus subsp. saprophyticus (strain ATCC 15305 / DSM 20229 / NCIMB 8711 / NCTC 7292 / S-41), this protein is Malate dehydrogenase.